A 102-amino-acid chain; its full sequence is MYAVFQSGGKQHRVSEGQTIRLEKLDIATGETVEFDQVLMVANGDDIKIGAPVVEGVKIKAEVVAHGRGEKIKIVKFRRRKHSRKQQGHRQWFTDVKITGIA.

It belongs to the bacterial ribosomal protein bL21 family. As to quaternary structure, part of the 50S ribosomal subunit. Contacts protein L20.

This protein binds to 23S rRNA in the presence of protein L20. The polypeptide is Large ribosomal subunit protein bL21 (Photorhabdus laumondii subsp. laumondii (strain DSM 15139 / CIP 105565 / TT01) (Photorhabdus luminescens subsp. laumondii)).